Consider the following 626-residue polypeptide: Dual specificity testis-specific protein kinase 1 (626 aa).

The interval 1–41 (MAGERPPLRGPGPGPGEVPGEGPPGPGGTGGGPGRGRPSSY) is disordered. The segment covering 8 to 26 (LRGPGPGPGEVPGEGPPGP) has biased composition (pro residues). The region spanning 57–314 (FHCAEKIGAG…TEITQHLEWI (258 aa)) is the Protein kinase domain. ATP contacts are provided by residues 63–71 (IGAGFFSEV) and K86. The Proton acceptor role is filled by D175. Residue S220 is modified to Phosphoserine; by autocatalysis. Disordered stretches follow at residues 331 to 373 (HNQG…NWGD), 423 to 488 (ETLV…QLPL), and 529 to 564 (WAGE…EPDE). At R338 the chain carries Omega-N-methylarginine. Basic and acidic residues predominate over residues 348 to 357 (PDPRLSRSRS). The required for interaction with YWHAB stretch occupies residues 419–524 (VTTPETLVQP…NNNPPAVVVN (106 aa)). Residues 476-485 (EPEPPGPAPQ) show a composition bias toward pro residues. Residues 527–624 (QGWAGEPWNR…PTPSLQLPGA (98 aa)) are required for interaction with PARVA. The segment at 527-626 (QGWAGEPWNR…PSLQLPGARS (100 aa)) is required for interaction with SPRED1 and SPRY2. Required for TESK1-mediated dephosphorylation of SPRY2 and SPRY2 inhibition of ERK phosphorylation.

Belongs to the protein kinase superfamily. TKL Ser/Thr protein kinase family. Interacts (via both C- and N-termini) with SPRY4 (via C-terminus); the interaction inhibits TESK1 kinase activity. Interacts with TAOK1; the interaction inhibits TAOK1 kinase activity. Interacts (via C-terminus) with SPRED1 (via C-terminus); the interaction inhibits TESK1 kinase activity. Interacts (via C-terminus) with PARVA/PARVIN (via C-terminus); the interaction inhibits TESK1 kinase activity. Interacts with YWHAB/14-3-3 beta; the interaction is dependent on the phosphorylation of TESK1 Ser-437 and inhibits TESK1 kinase activity. Interacts with SPRY1, SPRY3 and SPRED2. Interacts (via C-terminus) with SPRY2 (via C-terminus); the interaction disrupts SPRY2 interaction with PPP2CA/PP2A-C, possibly by vesicular sequestration of SPRY2. Therefore dephosphorylation of SPRY2 by the serine/threonine-protein phosphatase 2A (PP2A) holoenzyme is lost, inhibiting its interaction with GRB2. The cofactor is Mg(2+). Mn(2+) is required as a cofactor. Post-translationally, autophosphorylated on serine and tyrosine residues. In terms of tissue distribution, expressed in podocytes and renal tubular cells in the kidney (at protein level).

It is found in the cytoplasm. The protein localises to the perinuclear region. Its subcellular location is the cytoskeleton. It localises to the microtubule organizing center. The protein resides in the centrosome. It is found in the cell projection. The protein localises to the lamellipodium. It catalyses the reaction L-seryl-[protein] + ATP = O-phospho-L-seryl-[protein] + ADP + H(+). The catalysed reaction is L-threonyl-[protein] + ATP = O-phospho-L-threonyl-[protein] + ADP + H(+). The enzyme catalyses L-tyrosyl-[protein] + ATP = O-phospho-L-tyrosyl-[protein] + ADP + H(+). Activated by autophosphorylation on Ser-220. Kinase activity is inhibited by SPRED1. In terms of biological role, dual specificity protein kinase activity catalyzing autophosphorylation and phosphorylation of exogenous substrates on both serine/threonine and tyrosine residues. Regulates the cellular cytoskeleton by enhancing actin stress fiber formation via phosphorylation of cofilin and by preventing microtubule breakdown via inhibition of TAOK1/MARKK kinase activity. Inhibits podocyte motility via regulation of actin cytoskeletal dynamics and phosphorylation of CFL1. Positively regulates integrin-mediated cell spreading, via phosphorylation of cofilin. Suppresses ciliogenesis via multiple pathways; phosphorylation of CFL1, suppression of ciliary vesicle directional trafficking to the ciliary base, and by facilitating YAP1 nuclear localization where it acts as a transcriptional corepressor of the TEAD4 target genes AURKA and PLK1. Probably plays a central role at and after the meiotic phase of spermatogenesis. The protein is Dual specificity testis-specific protein kinase 1 (TESK1) of Homo sapiens (Human).